The following is a 2002-amino-acid chain: [F-actin]-monooxygenase MICAL3 (2002 aa).

The monooxygenase domain stretch occupies residues 2 to 494 (EERKHETMNP…RHLYDTGETK (493 aa)). FAD contacts are provided by residues cysteine 97, 116–118 (EKR), 123–125 (RNN), phenylalanine 183, tyrosine 298, and aspartate 398. The 107-residue stretch at 518–624 (VARSSKLLGW…YLTQFYEMFK (107 aa)) folds into the Calponin-homology (CH) domain. Phosphoserine is present on serine 649. The tract at residues 658-706 (GQTISRKRSPKDKKEKDLDGAGKRRKTSQSEEEEAPRGHRGERPTLVST) is disordered. Residues 663-684 (RKRSPKDKKEKDLDGAGKRRKT) carry the Nuclear localization signal motif. A compositionally biased stretch (basic and acidic residues) spans 669-679 (DKKEKDLDGAG). Serine 685 and serine 687 each carry phosphoserine. Residues 762-824 (DTCYFCQKRV…KPHYCYRLSG (63 aa)) form the LIM zinc-binding domain. Residues cysteine 764, cysteine 767, histidine 785, cysteine 788, cysteine 791, cysteine 794, cysteine 814, and histidine 817 each contribute to the Zn(2+) site. The interval 835–883 (PLSGKEAKGPLQDGATTDANGRANAVASSTERTPGSGVNGLEEPSIAKR) is disordered. A Phosphothreonine modification is found at threonine 887. 3 disordered regions span residues 907-1313 (QEVP…SPLA), 1335-1776 (RRSL…GKHR), and 1791-1821 (LSFSEDSDLSSDDVLEKSSQKSRREPRTYTE). The span at 938-950 (SEMEEEGEEEEEE) shows a compositional bias: acidic residues. A Phosphoserine modification is found at serine 977. The span at 991–1017 (NEEEEEEEEEYEEEEEEDYDEEEEESS) shows a compositional bias: acidic residues. Basic and acidic residues predominate over residues 1041 to 1054 (HWTHIREREEEERM). The segment covering 1055–1066 (APASESSASGAP) has biased composition (low complexity). Over residues 1068-1102 (DENDLEEDVDSEPAEIEGEAAEDGDPGDTGAELDD) the composition is skewed to acidic residues. Residues serine 1134, serine 1143, serine 1160, and serine 1192 each carry the phosphoserine modification. Polar residues predominate over residues 1150–1163 (GPSQATSPIRSPQE). Basic and acidic residues predominate over residues 1191–1218 (KSPEERLFPEPLLPKEKPKADAPSDLKA). Residues 1239–1258 (PGSPQPQPPVAASTPPPSPL) are compositionally biased toward pro residues. Polar residues-rich tracts occupy residues 1268 to 1280 (TEATVPSPTQSPI) and 1288 to 1302 (KTSTPLAPLPVQSQS). The residue at position 1274 (serine 1274) is a Phosphoserine. Phosphothreonine is present on threonine 1276. The residue at position 1278 (serine 1278) is a Phosphoserine. Serine 1310 and serine 1337 each carry phosphoserine. Position 1341 is a phosphothreonine (threonine 1341). 2 positions are modified to phosphoserine: serine 1371 and serine 1384. Residues 1407–1422 (PSDRELRSAQEERREL) are compositionally biased toward basic and acidic residues. Residues 1423–1435 (SSSSGLGLHGSSS) are compositionally biased toward low complexity. Position 1433 is a phosphoserine (serine 1433). Residues 1436 to 1451 (NMKTLGSQSFNTSDSA) are compositionally biased toward polar residues. At threonine 1454 the chain carries Phosphothreonine. Residues 1456–1467 (PSSPPPPPPPGE) show a composition bias toward pro residues. A compositionally biased stretch (acidic residues) spans 1516–1530 (SVEEIPFADDVEDTY). Residues 1588–1604 (EAKELAEERMRAREKSV) are compositionally biased toward basic and acidic residues. Serine 1649 bears the Phosphoserine mark. The residue at position 1651 (threonine 1651) is a Phosphothreonine. The segment covering 1657 to 1668 (GSEEPTLKHEAT) has biased composition (basic and acidic residues). Residues 1674-1694 (SPPSDSGGPDGSFTSSEGSSG) are compositionally biased toward low complexity. The segment covering 1695–1713 (KSKKRSSLFSPRRNKKEKK) has biased composition (basic residues). Serine 1701 and serine 1704 each carry phosphoserine. A compositionally biased stretch (polar residues) spans 1760 to 1769 (CPSTPSSGAT). Over residues 1804–1820 (VLEKSSQKSRREPRTYT) the composition is skewed to basic and acidic residues. Residues 1821-1992 (EEELNAKLTR…EEDKDLEAAM (172 aa)) adopt a coiled-coil conformation. Residues 1841-1990 (KQEELKRLHR…EREEDKDLEA (150 aa)) enclose the bMERB domain. At serine 1912 the chain carries Phosphoserine.

This sequence belongs to the Mical family. Interacts with RAB1B, RAB8A, RAB10, RAB13 and RAB15 (in their GTP-bound forms); binding to RAB1B is of low affinity compared to other Rab proteins; at least in case of RAB8A can bind 2 molecules of RAB8A simultaneously through a high and a low affinity binding site, respectively. Interacts with ERC1 and RAB8A; may bridge ERC1 with RAB8A. Interacts with KIF23 and ERC1; enhances the interaction between KIF23 and ERC1. Interacts with NINL isoform 2. FAD is required as a cofactor. Ubiquitous.

Its subcellular location is the cytoplasm. It is found in the cell cortex. The protein localises to the cytoskeleton. It localises to the nucleus. The protein resides in the midbody. Its subcellular location is the spindle. It is found in the cilium basal body. It carries out the reaction L-methionyl-[F-actin] + NADPH + O2 + H(+) = L-methionyl-(R)-S-oxide-[F-actin] + NADP(+) + H2O. Its function is as follows. Monooxygenase that promotes depolymerization of F-actin by mediating oxidation of specific methionine residues on actin to form methionine-sulfoxide, resulting in actin filament disassembly and preventing repolymerization. In the absence of actin, it also functions as a NADPH oxidase producing H(2)O(2). Seems to act as Rab effector protein and plays a role in vesicle trafficking. Involved in exocytic vesicles tethering and fusion: the monooxygenase activity is required for this process and implicates RAB8A associated with exocytotic vesicles. Required for cytokinesis. Contributes to stabilization and/or maturation of the intercellular bridge independently of its monooxygenase activity. Promotes recruitment of Rab8 and ERC1 to the intercellular bridge, and together these proteins are proposed to function in timely abscission. In Homo sapiens (Human), this protein is [F-actin]-monooxygenase MICAL3 (MICAL3).